We begin with the raw amino-acid sequence, 375 residues long: Anhydro-N-acetylmuramic acid kinase (375 aa).

An ATP-binding site is contributed by 14-21 (GTSMDGAD).

Belongs to the anhydro-N-acetylmuramic acid kinase family.

The catalysed reaction is 1,6-anhydro-N-acetyl-beta-muramate + ATP + H2O = N-acetyl-D-muramate 6-phosphate + ADP + H(+). It functions in the pathway amino-sugar metabolism; 1,6-anhydro-N-acetylmuramate degradation. Its pathway is cell wall biogenesis; peptidoglycan recycling. Catalyzes the specific phosphorylation of 1,6-anhydro-N-acetylmuramic acid (anhMurNAc) with the simultaneous cleavage of the 1,6-anhydro ring, generating MurNAc-6-P. Is required for the utilization of anhMurNAc either imported from the medium or derived from its own cell wall murein, and thus plays a role in cell wall recycling. This is Anhydro-N-acetylmuramic acid kinase from Cupriavidus pinatubonensis (strain JMP 134 / LMG 1197) (Cupriavidus necator (strain JMP 134)).